The following is a 1448-amino-acid chain: Glutamate receptor ionotropic, NMDA 2B (1448 aa).

A signal peptide spans 1–24; the sequence is MRPTEACCYLKISLIILFYMGCYA. Residues 25 to 554 are Extracellular-facing; it reads QKHPNMDIAV…SAFLEPFSAD (530 aa). Cys-81 and Cys-316 form a disulfide bridge. Zn(2+) is bound by residues His-122 and Glu-279. Residue Asn-336 is glycosylated (N-linked (GlcNAc...) asparagine). Cystine bridges form between Cys-426–Cys-453 and Cys-433–Cys-454. Residues Thr-511 and Arg-516 each contribute to the L-glutamate site. The chain crosses the membrane as a helical span at residues 555-573; that stretch reads VWVMMFVMLLIVSAVAVFV. The Cytoplasmic portion of the chain corresponds to 574–600; sequence FEYFSPVGYNRCLADGREPGGPSFTIG. Residues 601 to 620 constitute an intramembrane region (discontinuously helical); it reads KAIWLLWGLVFNNSVPVQNP. The segment at 601–620 is pore-forming; the sequence is KAIWLLWGLVFNNSVPVQNP. The Cytoplasmic portion of the chain corresponds to 621–627; sequence KGTTSKI. The chain crosses the membrane as a helical span at residues 628–643; that stretch reads MVSVWAFFAVIFLASY. Residues 644–819 are Extracellular-facing; sequence TANLAAFMIQ…LDIDNMAGVF (176 aa). Residue Asn-685 is glycosylated (N-linked (GlcNAc...) asparagine). L-glutamate-binding positions include 687–688 and Asp-729; that span reads ST. Cys-743 and Cys-798 are joined by a disulfide. The helical transmembrane segment at 820-839 threads the bilayer; the sequence is YMLAAAMALSLITFIMEHLF. Residues 840–1448 are Cytoplasmic-facing; sequence FWQLRHCFMG…EKLSSIESDV (609 aa). The segment covering 1254 to 1265 has biased composition (polar residues); that stretch reads APNSKYPQSPNG. Residues 1254 to 1277 form a disordered region; it reads APNSKYPQSPNGKAQKRNRSKLHR. Residues 1267–1277 show a composition bias toward basic residues; it reads AQKRNRSKLHR.

This sequence belongs to the glutamate-gated ion channel (TC 1.A.10.1) family. NR2B/GRIN2B subfamily. Heterotetramer. Forms heterotetrameric channels composed of two GluN1/zeta subunits (GRIN1), and two identical GluN2/epsilon subunits (GRIN2A, GRIN2B, GRIN2C or GRIN2D) or GluN3 subunits (GRIN3A or GRIN3B) (in vitro). In vivo, the subunit composition may depend on the expression levels of the different subunits. Detected in oocytes.

It localises to the cell membrane. It is found in the postsynaptic cell membrane. The catalysed reaction is Ca(2+)(in) = Ca(2+)(out). It catalyses the reaction Na(+)(in) = Na(+)(out). The enzyme catalyses K(+)(in) = K(+)(out). Functionally, component of N-methyl-D-aspartate (NMDA) receptors (NMDARs) that function as heterotetrameric, ligand-gated cation channels with high calcium permeability and voltage-dependent block by Mg(2+). Channel activation requires binding of the neurotransmitter L-glutamate to the GluN2 subunit, glycine binding to the GluN1 subunit, plus membrane depolarization to eliminate channel inhibition by Mg(2+). NMDARs mediate simultaneously the potasium efflux and the influx of calcium and sodium. Each GluN2 subunit confers differential attributes to channel properties, including activation, deactivation and desensitization kinetics, pH sensitivity, Ca2(+) permeability, and binding to allosteric modulators. This chain is Glutamate receptor ionotropic, NMDA 2B, found in Xenopus laevis (African clawed frog).